A 187-amino-acid chain; its full sequence is Large ribosomal subunit protein uL18 (187 aa).

The protein belongs to the universal ribosomal protein uL18 family. Part of the 50S ribosomal subunit. Interacts with proteins L5 and L21e, and attaches the 5S rRNA to the 23S rRNA. Has been cross-linked to L21e.

Functionally, this is one of 5 proteins that mediate the attachment of the 5S rRNA onto the large ribosomal subunit, where it forms part of the central protuberance and stabilizes the orientation of adjacent RNA domains. The polypeptide is Large ribosomal subunit protein uL18 (rpl18) (Haloarcula marismortui (strain ATCC 43049 / DSM 3752 / JCM 8966 / VKM B-1809) (Halobacterium marismortui)).